The primary structure comprises 198 residues: Cyclotides mra4/mra5 (198 aa).

The first 22 residues, 1-22 (MESNKMVVGVLLIAAFALPALA), serve as a signal peptide directing secretion. A propeptide spanning residues 23–79 (LFERDVITHETIEAVLKKSTPNSNTMLQEDAINALTGKTLISQTILEETLLKNGVVG) is cleaved from the precursor. 3 cysteine pairs are disulfide-bonded: Cys-84–Cys-100, Cys-88–Cys-102, and Cys-93–Cys-107. Residues 111-163 (SLALPTLEKDVITPEALEAVLKSNGGAIVNTKTIISNAIFEETLLNNANHVLG) constitute a propeptide that is removed on maturation. 3 disulfide bridges follow: Cys-167–Cys-183, Cys-171–Cys-185, and Cys-176–Cys-190. Positions 194-198 (SLALN) are excised as a propeptide.

Belongs to the cyclotide family. Bracelet subfamily. In terms of processing, these are cyclic peptides. The mature peptides contain 3 disulfide bonds each.

Probably participates in a plant defense mechanism. This chain is Cyclotides mra4/mra5, found in Melicytus ramiflorus (Whitey wood).